The primary structure comprises 399 residues: Tyrosine--tRNA ligase (399 aa).

A 'HIGH' region motif is present at residues 42–51 (PTAPDLHLGH). The 'KMSKS' region motif lies at 226–230 (KMSKS). K229 contacts ATP. An S4 RNA-binding domain is found at 336–396 (MPIAAVLNKA…GKKAFARITL (61 aa)).

Belongs to the class-I aminoacyl-tRNA synthetase family. TyrS type 2 subfamily. In terms of assembly, homodimer.

It localises to the cytoplasm. It catalyses the reaction tRNA(Tyr) + L-tyrosine + ATP = L-tyrosyl-tRNA(Tyr) + AMP + diphosphate + H(+). In terms of biological role, catalyzes the attachment of tyrosine to tRNA(Tyr) in a two-step reaction: tyrosine is first activated by ATP to form Tyr-AMP and then transferred to the acceptor end of tRNA(Tyr). This is Tyrosine--tRNA ligase from Pseudomonas fluorescens (strain Pf0-1).